The following is a 243-amino-acid chain: UPF0246 protein Sez_1855 (243 aa).

The protein belongs to the UPF0246 family.

This is UPF0246 protein Sez_1855 from Streptococcus equi subsp. zooepidemicus (strain MGCS10565).